A 351-amino-acid chain; its full sequence is Ferredoxin--NADP reductase (351 aa).

FAD is bound by residues Asp44, Gln52, Tyr57, Ile97, Phe132, Asp296, and Ser337.

This sequence belongs to the ferredoxin--NADP reductase type 2 family. As to quaternary structure, homodimer. FAD serves as cofactor.

The catalysed reaction is 2 reduced [2Fe-2S]-[ferredoxin] + NADP(+) + H(+) = 2 oxidized [2Fe-2S]-[ferredoxin] + NADPH. The polypeptide is Ferredoxin--NADP reductase (Burkholderia vietnamiensis (strain G4 / LMG 22486) (Burkholderia cepacia (strain R1808))).